The chain runs to 625 residues: Chaperone protein HtpG (625 aa).

The segment at 1-337 is a; substrate-binding; that stretch reads MSTNQETRGF…TNDLPLNVSR (337 aa). The tract at residues 338 to 554 is b; sequence EILQENKITA…NDEMTTQMAK (217 aa). The c stretch occupies residues 555-625; the sequence is LFAAMGQKAP…FIKRMNKLLG (71 aa).

This sequence belongs to the heat shock protein 90 family. Homodimer.

It localises to the cytoplasm. Functionally, molecular chaperone. Has ATPase activity. The chain is Chaperone protein HtpG from Actinobacillus pleuropneumoniae serotype 5b (strain L20).